A 303-amino-acid chain; its full sequence is uncharacterized protein (303 aa).

4 helical membrane-spanning segments follow: residues 55–77 (FLVK…LFIQ), 92–111 (PAVF…TKII), 208–230 (FSLP…ATSL), and 240–257 (IPHI…KILI).

It localises to the cell membrane. This is an uncharacterized protein from Bacillus subtilis (strain 168).